A 281-amino-acid polypeptide reads, in one-letter code: Small ribosomal subunit protein uS2 (281 aa).

The segment at arginine 229–glutamate 281 is disordered. The segment covering glutamate 255–alanine 275 has biased composition (low complexity).

Belongs to the universal ribosomal protein uS2 family.

This chain is Small ribosomal subunit protein uS2, found in Bifidobacterium longum subsp. infantis (strain ATCC 15697 / DSM 20088 / JCM 1222 / NCTC 11817 / S12).